The sequence spans 394 residues: Acid ceramidase (394 aa).

The N-terminal stretch at 1 to 20 (MLGRSLLTWVLAAAVTCAQA) is a signal peptide. C30 and C339 are joined by a disulfide. Catalysis depends on C142, which acts as the Nucleophile. N-linked (GlcNAc...) asparagine glycosylation is found at N194, N258, N285, and N341. Cysteines 387 and 391 form a disulfide.

The protein belongs to the acid ceramidase family. As to quaternary structure, heterodimer; disulfide-linked. The heterodimer is composed of the disulfide-linked alpha and beta chains produced by autocatalytic cleavage of the precursor. Post-translationally, N-glycosylated. Proteolytically cleaved into two chains alpha and beta that remain associated via a disulfide bond. Cleavage gives rise to a conformation change that activates the enzyme. The same catalytic Cys residue mediates the autoproteolytic cleavage and subsequent hydrolysis of lipid substrates. The beta chain may undergo an additional C-terminal processing.

It localises to the lysosome. The protein resides in the secreted. The enzyme catalyses an N-acylsphing-4-enine + H2O = sphing-4-enine + a fatty acid. It catalyses the reaction N-dodecanoylsphing-4-enine + H2O = dodecanoate + sphing-4-enine. It carries out the reaction N-tetradecanoylsphing-4-enine + H2O = tetradecanoate + sphing-4-enine. The catalysed reaction is N-hexadecanoylsphing-4-enine + H2O = sphing-4-enine + hexadecanoate. The enzyme catalyses N-octadecanoylsphing-4-enine + H2O = sphing-4-enine + octadecanoate. It catalyses the reaction N-dodecanoyl-(4R)-hydroxysphinganine + H2O = (4R)-hydroxysphinganine + dodecanoate. It carries out the reaction N-(dodecanoyl)-sphinganine + H2O = dodecanoate + sphinganine. The catalysed reaction is N-(acetyl)-sphing-4-enine + H2O = sphing-4-enine + acetate. The enzyme catalyses N-(hexanoyl)sphing-4-enine + H2O = hexanoate + sphing-4-enine. It catalyses the reaction N-octanoylsphing-4-enine + H2O = octanoate + sphing-4-enine. It carries out the reaction N-(9Z-octadecenoyl)-sphing-4-enine + H2O = sphing-4-enine + (9Z)-octadecenoate. The catalysed reaction is N-dodecanoylethanolamine + H2O = dodecanoate + ethanolamine. It participates in lipid metabolism; sphingolipid metabolism. Functionally, lysosomal ceramidase that hydrolyzes sphingolipid ceramides into sphingosine and free fatty acids at acidic pH. Ceramides, sphingosine, and its phosphorylated form sphingosine-1-phosphate are bioactive lipids that mediate cellular signaling pathways regulating several biological processes including cell proliferation, apoptosis and differentiation. Has a higher catalytic efficiency towards C12-ceramides versus other ceramides. Also catalyzes the reverse reaction allowing the synthesis of ceramides from fatty acids and sphingosine. For the reverse synthetic reaction, the natural sphingosine D-erythro isomer is more efficiently utilized as a substrate compared to D-erythro-dihydrosphingosine and D-erythro-phytosphingosine, while the fatty acids with chain lengths of 12 or 14 carbons are the most efficiently used. Also has an N-acylethanolamine hydrolase activity. By regulating the levels of ceramides, sphingosine and sphingosine-1-phosphate in the epidermis, mediates the calcium-induced differentiation of epidermal keratinocytes. Also indirectly regulates tumor necrosis factor/TNF-induced apoptosis. By regulating the intracellular balance between ceramides and sphingosine, in adrenocortical cells, probably also acts as a regulator of steroidogenesis. The chain is Acid ceramidase from Rattus norvegicus (Rat).